The chain runs to 244 residues: Putative lipoprotein LprA (244 aa).

The signal sequence occupies residues 1-24 (MKHPPCSVVAAATAILAVVLAIGG). Cys-25 is lipidated: N-palmitoyl cysteine. Cys-25 is lipidated: S-diacylglycerol cysteine.

This sequence belongs to the LppX/LprAFG lipoprotein family.

It localises to the cell membrane. This is Putative lipoprotein LprA (lprA) from Mycobacterium bovis (strain ATCC BAA-935 / AF2122/97).